A 192-amino-acid chain; its full sequence is Probable chorismate pyruvate-lyase (192 aa).

Substrate-binding residues include R85, L120, and E176.

The protein belongs to the UbiC family.

The protein resides in the cytoplasm. The enzyme catalyses chorismate = 4-hydroxybenzoate + pyruvate. The protein operates within cofactor biosynthesis; ubiquinone biosynthesis. In terms of biological role, removes the pyruvyl group from chorismate, with concomitant aromatization of the ring, to provide 4-hydroxybenzoate (4HB) for the ubiquinone pathway. This chain is Probable chorismate pyruvate-lyase, found in Pseudoalteromonas atlantica (strain T6c / ATCC BAA-1087).